A 345-amino-acid polypeptide reads, in one-letter code: Alpha-2-HS-glycoprotein (345 aa).

The first 18 residues, 1–18 (MKSLVLLLCFAQLWGCQS), serve as a signal peptide directing secretion. One can recognise a Cystatin fetuin-A-type 1 domain in the interval 19 to 133 (APQGTGLGFR…QFRVMHTQCH (115 aa)). Cystine bridges form between Cys32–Cys336, Cys89–Cys100, Cys114–Cys132, Cys146–Cys149, Cys208–Cys219, and Cys230–Cys247. N-linked (GlcNAc...) asparagine glycosylation is present at Asn99. Phosphoserine is present on Ser134. Thr135 carries the phosphothreonine modification. Ser138 carries the post-translational modification Phosphoserine. The Cystatin fetuin-A-type 2 domain maps to 144-250 (KLCPRCPLLT…EEVSVACKLF (107 aa)). Residues Asn156 and Asn176 are each glycosylated (N-linked (GlcNAc...) asparagine). Ser305, Ser309, Ser312, and Ser314 each carry phosphoserine. The segment at 312–334 (SASGETLHSPKVGQPGAAGPVSP) is disordered.

It belongs to the fetuin family. In terms of processing, phosphorylated by FAM20C in the extracellular medium. As to expression, liver is the major site of synthesis, but fetuin is also expressed in limb buds and other extrahepatic tissues during development.

It localises to the secreted. Functionally, probably involved in differentiation. In terms of biological role, (Microbial infection) Facilitates invasion of hepatocytes by Plasmodium berghei sporozoites. This Mus musculus (Mouse) protein is Alpha-2-HS-glycoprotein (Ahsg).